The sequence spans 182 residues: Succinate dehydrogenase cytochrome b560 subunit, mitochondrial (182 aa).

The chain crosses the membrane as a helical span at residues Leu-65–Leu-94. The Mitochondrial intermembrane segment spans residues Pro-95 to Val-114. The chain crosses the membrane as a helical span at residues Thr-115–Phe-139. Heme is bound at residue His-129. At Asp-140–Asn-147 the chain is on the mitochondrial matrix side. Residues Val-148–Ile-169 traverse the membrane as a helical segment. At Val-170–Asn-172 the chain is on the mitochondrial intermembrane side.

It belongs to the cytochrome b560 family. Component of complex II composed of four subunits: a flavoprotein (FP), iron-sulfur protein (IP), and a cytochrome b560 composed of two integral membrane proteins. Heme serves as cofactor.

The protein localises to the mitochondrion inner membrane. It functions in the pathway carbohydrate metabolism; tricarboxylic acid cycle. Membrane-anchoring subunit of succinate dehydrogenase (SDH) that is involved in complex II of the mitochondrial electron transport chain and is responsible for transferring electrons from succinate to ubiquinone (coenzyme Q). Mediates resistance to enteropathogenic E.coli infection. The protein is Succinate dehydrogenase cytochrome b560 subunit, mitochondrial (mev-1) of Caenorhabditis elegans.